A 482-amino-acid polypeptide reads, in one-letter code: tRNA sulfurtransferase (482 aa).

Residues 61–165 (DLVRDALTRI…DDRLLLVRGR (105 aa)) form the THUMP domain. Residues 183–184 (LI), K265, G287, and Q296 each bind ATP. The cysteines at positions 344 and 456 are disulfide-linked. The 79-residue stretch at 404 to 482 (LAEGDVVLDI…GYDNVRVYRP (79 aa)) folds into the Rhodanese domain. C456 functions as the Cysteine persulfide intermediate in the catalytic mechanism.

It belongs to the ThiI family.

Its subcellular location is the cytoplasm. It carries out the reaction [ThiI sulfur-carrier protein]-S-sulfanyl-L-cysteine + a uridine in tRNA + 2 reduced [2Fe-2S]-[ferredoxin] + ATP + H(+) = [ThiI sulfur-carrier protein]-L-cysteine + a 4-thiouridine in tRNA + 2 oxidized [2Fe-2S]-[ferredoxin] + AMP + diphosphate. The catalysed reaction is [ThiS sulfur-carrier protein]-C-terminal Gly-Gly-AMP + S-sulfanyl-L-cysteinyl-[cysteine desulfurase] + AH2 = [ThiS sulfur-carrier protein]-C-terminal-Gly-aminoethanethioate + L-cysteinyl-[cysteine desulfurase] + A + AMP + 2 H(+). It functions in the pathway cofactor biosynthesis; thiamine diphosphate biosynthesis. Catalyzes the ATP-dependent transfer of a sulfur to tRNA to produce 4-thiouridine in position 8 of tRNAs, which functions as a near-UV photosensor. Also catalyzes the transfer of sulfur to the sulfur carrier protein ThiS, forming ThiS-thiocarboxylate. This is a step in the synthesis of thiazole, in the thiamine biosynthesis pathway. The sulfur is donated as persulfide by IscS. This Edwardsiella ictaluri (strain 93-146) protein is tRNA sulfurtransferase.